The following is a 254-amino-acid chain: 3-beta-hydroxysteroid dehydrogenase (254 aa).

Residues valine 12–asparagine 40 and aspartate 61 each bind NAD(+). Position 139 (serine 139) interacts with substrate. The active-site Proton acceptor is the tyrosine 152. Residue lysine 156 participates in NAD(+) binding.

The protein belongs to the short-chain dehydrogenases/reductases (SDR) family. As to quaternary structure, homotetramer.

The enzyme catalyses testosterone + NAD(+) = androst-4-ene-3,17-dione + NADH + H(+). It catalyses the reaction testosterone + NADP(+) = androst-4-ene-3,17-dione + NADPH + H(+). The polypeptide is 3-beta-hydroxysteroid dehydrogenase (Comamonas testosteroni (Pseudomonas testosteroni)).